The chain runs to 47 residues: Protein DVU_0533 (47 aa).

The chain crosses the membrane as a helical span at residues 18–37; that stretch reads WTYILMGVTLLVYVGYWLFL.

The protein localises to the cell membrane. In terms of biological role, HMWC (high-molecular-weight cytochrome c), ORF2, ORF3, ORF4, ORF5 and ORF6 in the HMC operon form a transmembrane protein complex that allows electron flow from the periplasmic hydrogenase to the cytoplasmic enzymes that catalyze reduction of sulfates. The polypeptide is Protein DVU_0533 (Nitratidesulfovibrio vulgaris (strain ATCC 29579 / DSM 644 / CCUG 34227 / NCIMB 8303 / VKM B-1760 / Hildenborough) (Desulfovibrio vulgaris)).